A 242-amino-acid chain; its full sequence is Phosphatidylcholine synthase (242 aa).

Topologically, residues 1 to 15 (MKIFNYKRVPYAEMR) are cytoplasmic. The helical transmembrane segment at 16–36 (AFSVHILTASGSFLAFLGVVA) threads the bilayer. At 37-41 (AAEHR) the chain is on the periplasmic side. A helical transmembrane segment spans residues 42–62 (FIDMFWWLGLALLVDGIDGPI). Topologically, residues 63–76 (ARKVRVKEVLPNWS) are cytoplasmic. The chain crosses the membrane as a helical span at residues 77–97 (GDTLDNIIDYVTYVLLPAFAL). The Periplasmic portion of the chain corresponds to 98–100 (YQS). Residues 101–121 (GMIGEPWSFVAAGMIVVSSAI) form a helical membrane-spanning segment. Over 122-133 (YYADMGMKTDEY) the chain is Cytoplasmic. The chain crosses the membrane as a helical span at residues 134-154 (FFSGFPVVWNMIVFTLFVIDA). Topologically, residues 155–159 (SATTA) are periplasmic. A helical membrane pass occupies residues 160–180 (LTVVIVSVVLTFLPINFLHPV). The Cytoplasmic segment spans residues 181–187 (RVKRLRP). The helical transmembrane segment at 188-208 (LNLGVFFLWSALGIFSLLMHF) threads the bilayer. Residues 209-214 (DTPEWA) are Periplasmic-facing. Residues 215–235 (LILFIVTGAYLYVIGAVLQFF) traverse the membrane as a helical segment. Residues 236-242 (PALGRET) lie on the Cytoplasmic side of the membrane.

It belongs to the CDP-alcohol phosphatidyltransferase class-I family. It depends on Mn(2+) as a cofactor.

The protein localises to the cell inner membrane. It carries out the reaction a CDP-1,2-diacyl-sn-glycerol + choline = a 1,2-diacyl-sn-glycero-3-phosphocholine + CMP + H(+). In terms of biological role, condenses choline with CDP-diglyceride to produce phosphatidylcholine and CMP. This is Phosphatidylcholine synthase from Rhizobium johnstonii (strain DSM 114642 / LMG 32736 / 3841) (Rhizobium leguminosarum bv. viciae).